The primary structure comprises 364 residues: Probable 7-methylxanthine methyltransferase 5 (364 aa).

Position 19 (Tyr19) interacts with S-adenosyl-L-homocysteine. Residue Thr26 participates in theobromine binding. S-adenosyl-L-homocysteine contacts are provided by Cys64, Gln69, Asp101, Leu102, Ser134, and Phe135. 3 residues coordinate theobromine: Tyr152, His155, and Trp156. Mg(2+) is bound by residues Asn172, Asp258, Phe260, and Asn261. Phe314 is a binding site for theobromine.

This sequence belongs to the methyltransferase superfamily. Type-7 methyltransferase family. It depends on Mg(2+) as a cofactor.

The catalysed reaction is 7-methylxanthine + S-adenosyl-L-methionine = theobromine + S-adenosyl-L-homocysteine + H(+). Its pathway is alkaloid biosynthesis. Involved in the biosynthesis of theobromine. This chain is Probable 7-methylxanthine methyltransferase 5, found in Theobroma cacao (Cacao).